The primary structure comprises 359 residues: Alpha-N-acetylneuraminide alpha-2,8-sialyltransferase (359 aa).

At 1-28 (MWGRWRGAGGRRGVAQPVIPQMKLLGGR) the chain is on the cytoplasmic side. The chain crosses the membrane as a helical; Signal-anchor for type II membrane protein span at residues 29-49 (VPLGASALGLLIVCWFYIFPG). The Lumenal segment spans residues 50 to 359 (GERLPGHKEM…KKDVSSKKPH (310 aa)). N-linked (GlcNAc...) asparagine glycosylation is found at asparagine 73 and asparagine 121. 2 disulfide bridges follow: cysteine 140/cysteine 289 and cysteine 154/cysteine 349. CMP-N-acetyl-beta-neuraminate contacts are provided by asparagine 145 and asparagine 168. Asparagine 247 carries an N-linked (GlcNAc...) asparagine glycan. Serine 276, threonine 277, glycine 278, tryptophan 298, and histidine 312 together coordinate CMP-N-acetyl-beta-neuraminate. Histidine 324 serves as the catalytic Proton donor/acceptor.

It belongs to the glycosyltransferase 29 family. As to expression, expressed in the dorsal blastopore lip and in the presumptive neuroectoderm in stage 11 embryos. During gastrulation, strongly expressed in the involuting mesoderm. At stages 13 and 16, expressed in the neural plate and neural fold, paraxial mesoderm and notochord. At stages 19 and 22 (neural tube and early tailbud), strongly expressed in the neural tube and notochord. At the tadpole stage, expressed in the head region, branchial arches and otic and optic primordia. Also localized in the notochord and weakly expressed in the somites. In adults, expressed in the brain and ovary. Isoform 2 (short) is expressed at a low level in the adult testis and muscle, and at a high level in the skin. Isoform 1 (long) is expressed at a high level in the adult lung and kidney. Both isoforms 1 and 2 are expressed in the gut and liver.

The protein localises to the golgi apparatus membrane. The enzyme catalyses an N-acetyl-alpha-neuraminyl-(2-&gt;3)-beta-D-galactosyl derivative + CMP-N-acetyl-beta-neuraminate = an N-acetyl-alpha-neuraminyl-(2-&gt;8)-N-acetyl-alpha-neuraminyl-(2-&gt;3)-beta-D-galactosyl derivative + CMP + H(+). It carries out the reaction a ganglioside GM3 (d18:1(4E)) + CMP-N-acetyl-beta-neuraminate = a ganglioside GD3 (d18:1(4E)) + CMP + H(+). The catalysed reaction is a ganglioside GD3 (d18:1(4E)) + CMP-N-acetyl-beta-neuraminate = a ganglioside GT3 (d18:1(4E)) + CMP + H(+). It catalyses the reaction a ganglioside GD1a (d18:1(4E)) + CMP-N-acetyl-beta-neuraminate = a ganglioside GT1a (d18:1(4E)) + CMP + H(+). The enzyme catalyses a ganglioside GT1b (d18:1(4E)) + CMP-N-acetyl-beta-neuraminate = a ganglioside GQ1b (d18:1(4E)) + CMP + H(+). It carries out the reaction a ganglioside GM1b (d18:1(4E)) + CMP-N-acetyl-beta-neuraminate = a ganglioside GD1c (d18:1(4E)) + CMP + H(+). The catalysed reaction is a ganglioside GD3 + CMP-N-acetyl-beta-neuraminate = a ganglioside GT3 + CMP + H(+). It catalyses the reaction [alpha-N-acetylneuraminyl-(2-&gt;8)](n)-alpha-N-acetylneuraminyl-(2-&gt;8)-alpha-N-acetylneuraminyl-(2-&gt;3)-beta-D-galactosyl-(1-&gt;4)-beta-D-glucosyl-(1&lt;-&gt;1)-ceramide + CMP-N-acetyl-beta-neuraminate = [alpha-N-acetylneuraminyl-(2-&gt;8)](n+1)-alpha-N-acetylneuraminyl-(2-&gt;8)-alpha-N-acetylneuraminyl-(2-&gt;3)-beta-D-galactosyl-(1-&gt;4)-beta-D-glucosyl-(1&lt;-&gt;1)-ceramide + CMP + H(+). It functions in the pathway protein modification; protein glycosylation. It participates in lipid metabolism; sphingolipid metabolism. In terms of biological role, catalyzes the addition of sialic acid in alpha 2,8-linkage to the sialic acid moiety of the ganglioside GM3 to form ganglioside GD3; gangliosides are a subfamily of complex glycosphingolipds that contain one or more residues of sialic acid. Glycosphingolipids are required for convergence extension movements during early development. Can catalyze the addition of a second alpha-2,8- sialic acid to GD3 to form GT3. Can use GM1b, GD1a and GT1b as acceptor substrates to synthesize GD1c, GT1a and GQ1b respectively. This Xenopus laevis (African clawed frog) protein is Alpha-N-acetylneuraminide alpha-2,8-sialyltransferase.